A 483-amino-acid chain; its full sequence is Glutamyl-tRNA(Gln) amidotransferase subunit A (483 aa).

Active-site charge relay system residues include Lys-77 and Ser-152. Ser-176 (acyl-ester intermediate) is an active-site residue.

The protein belongs to the amidase family. GatA subfamily. Heterotrimer of A, B and C subunits.

The catalysed reaction is L-glutamyl-tRNA(Gln) + L-glutamine + ATP + H2O = L-glutaminyl-tRNA(Gln) + L-glutamate + ADP + phosphate + H(+). Allows the formation of correctly charged Gln-tRNA(Gln) through the transamidation of misacylated Glu-tRNA(Gln) in organisms which lack glutaminyl-tRNA synthetase. The reaction takes place in the presence of glutamine and ATP through an activated gamma-phospho-Glu-tRNA(Gln). The protein is Glutamyl-tRNA(Gln) amidotransferase subunit A of Listeria innocua serovar 6a (strain ATCC BAA-680 / CLIP 11262).